A 254-amino-acid polypeptide reads, in one-letter code: MVISAIRGGIGFLTRVPIGHDKKAWDAFRQTPVAFTVIGYPLGTIVALPFVLLSIVPVPTLIGVYLLILIGVTGITHIDGIADIGDAAVVHDTDDEHSRRRSVLHDSQVGVGGALAVTVTVVSLALGVLGATRTTPQVTFILVLTAEVGAKSAMALLVCTGDAAHDGLGAALIDESTPLSLFPVILALTPLLLAIPYLGASPTAAVVLTPLIVALVIKQWADNALGGISGDVLGAVNEVSRAAAIHAGVVVWML.

6 helical membrane passes run 28–48 (FRQT…IVAL), 62–81 (IGVY…IDGI), 109–129 (VGVG…LGVL), 138–158 (VTFI…ALLV), 179–199 (LSLF…PYLG), and 200–220 (ASPT…IKQW).

It belongs to the CobS family. Mg(2+) serves as cofactor.

It localises to the cell membrane. It carries out the reaction alpha-ribazole + adenosylcob(III)inamide-GDP = adenosylcob(III)alamin + GMP + H(+). The catalysed reaction is alpha-ribazole 5'-phosphate + adenosylcob(III)inamide-GDP = adenosylcob(III)alamin 5'-phosphate + GMP + H(+). The protein operates within cofactor biosynthesis; adenosylcobalamin biosynthesis; adenosylcobalamin from cob(II)yrinate a,c-diamide: step 7/7. Joins adenosylcobinamide-GDP and alpha-ribazole to generate adenosylcobalamin (Ado-cobalamin). Also synthesizes adenosylcobalamin 5'-phosphate from adenosylcobinamide-GDP and alpha-ribazole 5'-phosphate. The polypeptide is Adenosylcobinamide-GDP ribazoletransferase (Haloquadratum walsbyi (strain DSM 16790 / HBSQ001)).